The following is a 440-amino-acid chain: MSLLPTATISDIARHNGRVVTLAGWVAHKTEKGKLVFIRLRDGSGVMQCVVFRKNVAEETFIAAQRLTLESSCRITGTVRADERAPGGFELDVNGIEIIQIAPEYPIQPKEHGVEFLMEHRHLWVRSSKQHALLRIRAEIIAAAQEWLNAQGFVRFDTPILTPCAAEGTTNLFATPYFDLGTAYLGQTGQLYVEAGMMSFGKVYCFGPTFRAEKSKTRRHLTEFWMIEPEVAFALHDDNLALQEQFVSAIVQRVLERRADDLATLERDTKPLERCVPPFPRITYDEALRLIAERYAEVEGCTPLEWGEDLGAPHETLIASMFDRPVFVERFPSAIKAFYMEPDPNRPEVALCADLLAPEGYGEIIGGSQRIHDAALLERRIREYGLNVDDYRWYIDLRRYGSVPHSGFGMGIERATAWIGGTHHIRETIPFPRMLYRMYP.

Belongs to the class-II aminoacyl-tRNA synthetase family. Homodimer.

It is found in the cytoplasm. It catalyses the reaction tRNA(Asn) + L-asparagine + ATP = L-asparaginyl-tRNA(Asn) + AMP + diphosphate + H(+). The polypeptide is Asparagine--tRNA ligase (Roseiflexus castenholzii (strain DSM 13941 / HLO8)).